A 140-amino-acid polypeptide reads, in one-letter code: Nucleoside diphosphate kinase (140 aa).

6 residues coordinate ATP: lysine 11, phenylalanine 59, arginine 87, threonine 93, arginine 104, and asparagine 114. Histidine 117 (pros-phosphohistidine intermediate) is an active-site residue.

This sequence belongs to the NDK family. As to quaternary structure, homotetramer. The cofactor is Mg(2+).

The protein resides in the cytoplasm. The enzyme catalyses a 2'-deoxyribonucleoside 5'-diphosphate + ATP = a 2'-deoxyribonucleoside 5'-triphosphate + ADP. The catalysed reaction is a ribonucleoside 5'-diphosphate + ATP = a ribonucleoside 5'-triphosphate + ADP. Functionally, major role in the synthesis of nucleoside triphosphates other than ATP. The ATP gamma phosphate is transferred to the NDP beta phosphate via a ping-pong mechanism, using a phosphorylated active-site intermediate. In Erythrobacter litoralis (strain HTCC2594), this protein is Nucleoside diphosphate kinase.